Consider the following 246-residue polypeptide: 2-C-methyl-D-erythritol 4-phosphate cytidylyltransferase (246 aa).

It belongs to the IspD/TarI cytidylyltransferase family. IspD subfamily.

It carries out the reaction 2-C-methyl-D-erythritol 4-phosphate + CTP + H(+) = 4-CDP-2-C-methyl-D-erythritol + diphosphate. It participates in isoprenoid biosynthesis; isopentenyl diphosphate biosynthesis via DXP pathway; isopentenyl diphosphate from 1-deoxy-D-xylulose 5-phosphate: step 2/6. In terms of biological role, catalyzes the formation of 4-diphosphocytidyl-2-C-methyl-D-erythritol from CTP and 2-C-methyl-D-erythritol 4-phosphate (MEP). The protein is 2-C-methyl-D-erythritol 4-phosphate cytidylyltransferase of Clostridium tetani (strain Massachusetts / E88).